The following is a 319-amino-acid chain: uncharacterized protein (319 aa).

In terms of domain architecture, SIS spans 36-178 (IIEFLLSFKG…MTVIHEERGF (143 aa)). Residue 51–56 (GIGKSG) coordinates ATP. 2 CBS domains span residues 203-263 (MRSG…HLKT) and 268-319 (MTKN…MGVS).

This sequence belongs to the SIS family. GutQ/KpsF subfamily.

This is an uncharacterized protein from Rickettsia prowazekii (strain Madrid E).